A 260-amino-acid chain; its full sequence is Snake venom serine protease homolog KN7 (260 aa).

The first 18 residues, 1–18, serve as a signal peptide directing secretion; the sequence is MVLIRVLANLLILQLSYA. Positions 19 to 24 are excised as a propeptide; it reads QKSSEL. The region spanning 25 to 251 is the Peptidase S1 domain; it reads IIGGDECNIN…HLDWIKSIIA (227 aa). Cystine bridges form between C31–C165, C52–C68, C100–C258, C144–C212, C176–C191, and C202–C227. N-linked (GlcNAc...) asparagine glycans are attached at residues N83, N123, and N124.

Belongs to the peptidase S1 family. Snake venom subfamily. In terms of tissue distribution, expressed by the venom gland.

It is found in the secreted. Its function is as follows. Snake venom serine protease homolog that may act in the hemostasis system of the prey. This chain is Snake venom serine protease homolog KN7, found in Trimeresurus stejnegeri (Chinese green tree viper).